Here is a 371-residue protein sequence, read N- to C-terminus: Photosynthetic reaction center cytochrome c subunit (371 aa).

The heme site is built by methionine 114, cysteine 127, cysteine 130, histidine 131, methionine 153, histidine 167, cysteine 178, cysteine 181, histidine 182, methionine 267, cysteine 278, cysteine 281, histidine 282, cysteine 339, cysteine 342, and histidine 343.

As to quaternary structure, component of the photosynthetic reaction center composed of protein subunits L (PufL), M (PufM), H (PuhA) and cytochrome C (PufC). The reaction center interacts with light-harvesting antenna complex LH1. Post-translationally, binds 4 heme groups per subunit.

Its subcellular location is the cellular chromatophore membrane. Its function is as follows. The reaction center of purple bacteria contains a tightly bound cytochrome molecule which re-reduces the photo oxidized primary electron donor. This chain is Photosynthetic reaction center cytochrome c subunit (pufC), found in Roseobacter denitrificans (strain ATCC 33942 / OCh 114) (Erythrobacter sp. (strain OCh 114)).